A 362-amino-acid polypeptide reads, in one-letter code: Phosphoserine aminotransferase (362 aa).

L-glutamate contacts are provided by serine 9 and arginine 42. Pyridoxal 5'-phosphate-binding positions include 76–77 (GR), tryptophan 102, threonine 153, aspartate 174, and glutamine 197. Lysine 198 is subject to N6-(pyridoxal phosphate)lysine. 239–240 (NT) lines the pyridoxal 5'-phosphate pocket.

Belongs to the class-V pyridoxal-phosphate-dependent aminotransferase family. SerC subfamily. Homodimer. Pyridoxal 5'-phosphate serves as cofactor.

It is found in the cytoplasm. The catalysed reaction is O-phospho-L-serine + 2-oxoglutarate = 3-phosphooxypyruvate + L-glutamate. It catalyses the reaction 4-(phosphooxy)-L-threonine + 2-oxoglutarate = (R)-3-hydroxy-2-oxo-4-phosphooxybutanoate + L-glutamate. Its pathway is amino-acid biosynthesis; L-serine biosynthesis; L-serine from 3-phospho-D-glycerate: step 2/3. It participates in cofactor biosynthesis; pyridoxine 5'-phosphate biosynthesis; pyridoxine 5'-phosphate from D-erythrose 4-phosphate: step 3/5. In terms of biological role, catalyzes the reversible conversion of 3-phosphohydroxypyruvate to phosphoserine and of 3-hydroxy-2-oxo-4-phosphonooxybutanoate to phosphohydroxythreonine. The chain is Phosphoserine aminotransferase from Salmonella agona (strain SL483).